Reading from the N-terminus, the 432-residue chain is Short/branched chain specific acyl-CoA dehydrogenase, mitochondrial (432 aa).

The N-terminal 33 residues, 1–33 (MAVSAFQLWRAGGLLRRNFLTHSSSWKIPPRVL), are a transit peptide targeting the mitochondrion. An N6-acetyllysine; alternate modification is found at K70. Residue K70 is modified to N6-succinyllysine; alternate. Residues 174–183 (FCLSEAGAGS) and 207–209 (WIS) each bind FAD. Position 183 (S183) interacts with substrate. The residue at position 183 (S183) is a Phosphoserine. Residue Y229 coordinates substrate. Position 278 is an N6-succinyllysine (K278). Y283 contributes to the substrate binding site. K284 is modified (N6-acetyllysine; alternate). N6-succinyllysine; alternate is present on K284. Substrate is bound at residue 291–294 (NEGR). FAD is bound by residues R319, Q330, and 387–391 (EWMGG). The active-site Proton acceptor is the E414. Residue 416–418 (TSN) participates in FAD binding. N6-acetyllysine is present on K426.

The protein belongs to the acyl-CoA dehydrogenase family. As to quaternary structure, homotetramer. The cofactor is FAD. Ubiquitously expressed.

The protein localises to the mitochondrion matrix. The catalysed reaction is 2-methylbutanoyl-CoA + oxidized [electron-transfer flavoprotein] + H(+) = (2E)-2-methylbut-2-enoyl-CoA + reduced [electron-transfer flavoprotein]. It carries out the reaction (2S)-2-methylbutanoyl-CoA + oxidized [electron-transfer flavoprotein] + H(+) = (2E)-2-methylbut-2-enoyl-CoA + reduced [electron-transfer flavoprotein]. The enzyme catalyses (2R)-2-methylbutanoyl-CoA + oxidized [electron-transfer flavoprotein] + H(+) = ethylacryloyl-CoA + reduced [electron-transfer flavoprotein]. It catalyses the reaction butanoyl-CoA + oxidized [electron-transfer flavoprotein] + H(+) = (2E)-butenoyl-CoA + reduced [electron-transfer flavoprotein]. The catalysed reaction is 2-methylpropanoyl-CoA + oxidized [electron-transfer flavoprotein] + H(+) = 2-methylpropenoyl-CoA + reduced [electron-transfer flavoprotein]. It carries out the reaction hexanoyl-CoA + oxidized [electron-transfer flavoprotein] + H(+) = (2E)-hexenoyl-CoA + reduced [electron-transfer flavoprotein]. The enzyme catalyses valproyl-CoA + oxidized [electron-transfer flavoprotein] + H(+) = (2E)-2-propylpent-2-enoyl-CoA + reduced [electron-transfer flavoprotein]. It functions in the pathway lipid metabolism; mitochondrial fatty acid beta-oxidation. It participates in amino-acid degradation; L-isoleucine degradation. With respect to regulation, inhibited by N-ethylmaleimide, hydroxymercuribenzoate, methyl mercury iodide and heavy metals such as Hg2+, Cu2+, and Ag2+. Functionally, short and branched chain specific acyl-CoA dehydrogenase that catalyzes the removal of one hydrogen from C-2 and C-3 of the fatty acyl-CoA thioester, resulting in the formation of trans-2-enoyl-CoA. Among the different mitochondrial acyl-CoA dehydrogenases, acts specifically on short and branched chain acyl-CoA derivatives such as (S)-2-methylbutyryl-CoA as well as short straight chain acyl-CoAs such as butyryl-CoA. Plays an important role in the metabolism of L-isoleucine by catalyzing the dehydrogenation of 2-methylbutyryl-CoA, one of the steps of the L-isoleucine catabolic pathway. Can also act on valproyl-CoA, a metabolite of the valproic acid drug. This chain is Short/branched chain specific acyl-CoA dehydrogenase, mitochondrial, found in Rattus norvegicus (Rat).